Here is a 525-residue protein sequence, read N- to C-terminus: GMP synthase [glutamine-hydrolyzing] (525 aa).

Residues 8 to 206 (PLLILDFGSQ…VVDICKAPTE (199 aa)) form the Glutamine amidotransferase type-1 domain. C85 (nucleophile) is an active-site residue. Active-site residues include H180 and E182. A GMPS ATP-PPase domain is found at 207-400 (WTPEHIIDEA…LGLPHDMVYR (194 aa)). 234-240 (SGGVDSS) lines the ATP pocket.

As to quaternary structure, homodimer.

It catalyses the reaction XMP + L-glutamine + ATP + H2O = GMP + L-glutamate + AMP + diphosphate + 2 H(+). It functions in the pathway purine metabolism; GMP biosynthesis; GMP from XMP (L-Gln route): step 1/1. In terms of biological role, catalyzes the synthesis of GMP from XMP. This is GMP synthase [glutamine-hydrolyzing] from Legionella pneumophila (strain Corby).